The chain runs to 107 residues: L-rhamnose mutarotase (107 aa).

Tyr-18 provides a ligand contact to substrate. His-22 acts as the Proton donor in catalysis. Substrate is bound by residues Tyr-41 and 76 to 77 (WW).

This sequence belongs to the rhamnose mutarotase family. As to quaternary structure, homodimer.

The protein resides in the cytoplasm. The enzyme catalyses alpha-L-rhamnose = beta-L-rhamnose. The protein operates within carbohydrate metabolism; L-rhamnose metabolism. Functionally, involved in the anomeric conversion of L-rhamnose. The polypeptide is L-rhamnose mutarotase (Paraburkholderia xenovorans (strain LB400)).